The primary structure comprises 103 residues: Histone H4 (103 aa).

The span at 1-14 shows a compositional bias: gly residues; it reads MSGRGKGGKGLGKG. The interval 1–20 is disordered; that stretch reads MSGRGKGGKGLGKGGAKRHR. Residue K6 is modified to N6-acetyl-N6-methyllysine; alternate. An N6-acetyllysine; alternate mark is found at K6, K9, and K13. K6, K9, and K13 each carry N6-methyllysine; alternate. Residues K9 and K13 each carry the N6-butyryllysine; alternate modification. At K13 the chain carries N6-acetyl-N6-methyllysine; alternate. The residue at position 17 (K17) is an N6-acetyllysine. A DNA-binding region spans residues 17–21; the sequence is KRHRK. Residue K32 is modified to N6-succinyllysine. The residue at position 56 (R56) is an Omega-N-methylarginine. A phosphoserine mark is found at S61 and S65. An N6-succinyllysine modification is found at K78. K80 carries the N6-acetyllysine modification. Residue K92 is modified to N6-glutaryllysine.

The protein belongs to the histone H4 family. In terms of assembly, the nucleosome is a histone octamer containing two molecules each of H2A, H2B, H3 and H4 assembled in one H3-H4 heterotetramer and two H2A-H2B heterodimers. The octamer wraps approximately 147 bp of DNA. Histone H4 is a component of the UAF (upstream activation factor) complex which consists of UAF30, RRN5, RRN9, RRN10, and histones H3 and H4. Post-translationally, glutarylation at Lys-92 (H4K91glu) destabilizes nucleosomes by promoting dissociation of the H2A-H2B dimers from nucleosomes.

It localises to the nucleus. The protein resides in the chromosome. Core component of nucleosome. Nucleosomes wrap and compact DNA into chromatin, limiting DNA accessibility to the cellular machineries which require DNA as a template. Histones thereby play a central role in transcription regulation, DNA repair, DNA replication and chromosomal stability. DNA accessibility is regulated via a complex set of post-translational modifications of histones, also called histone code, and nucleosome remodeling. Component of the UAF (upstream activation factor) complex which interacts with the upstream element of the RNA polymerase I promoter and forms a stable preinitiation complex. Together with SPT15/TBP UAF seems to stimulate basal transcription to a fully activated level. The protein is Histone H4 (HHF1) of Saccharomyces cerevisiae (strain ATCC 204508 / S288c) (Baker's yeast).